The following is a 309-amino-acid chain: Homoserine O-succinyltransferase (309 aa).

Residue cysteine 142 is the Acyl-thioester intermediate of the active site. Residues lysine 163 and serine 192 each contribute to the substrate site. Histidine 235 serves as the catalytic Proton acceptor. The active site involves glutamate 237. Arginine 249 is a binding site for substrate.

It belongs to the MetA family.

The protein localises to the cytoplasm. It catalyses the reaction L-homoserine + succinyl-CoA = O-succinyl-L-homoserine + CoA. It participates in amino-acid biosynthesis; L-methionine biosynthesis via de novo pathway; O-succinyl-L-homoserine from L-homoserine: step 1/1. Functionally, transfers a succinyl group from succinyl-CoA to L-homoserine, forming succinyl-L-homoserine. This chain is Homoserine O-succinyltransferase, found in Cronobacter sakazakii (strain ATCC BAA-894) (Enterobacter sakazakii).